Reading from the N-terminus, the 227-residue chain is ATP-dependent dethiobiotin synthetase BioD (227 aa).

ATP is bound at residue 13–18 (EVGKSV). S17 lines the Mg(2+) pocket. K38 is an active-site residue. S42 is a substrate binding site. ATP is bound by residues D55, 116–119 (EGAG), and 176–177 (ND). The Mg(2+) site is built by D55 and E116.

Belongs to the dethiobiotin synthetase family. As to quaternary structure, homodimer. The cofactor is Mg(2+).

The protein localises to the cytoplasm. The catalysed reaction is (7R,8S)-7,8-diammoniononanoate + CO2 + ATP = (4R,5S)-dethiobiotin + ADP + phosphate + 3 H(+). It participates in cofactor biosynthesis; biotin biosynthesis; biotin from 7,8-diaminononanoate: step 1/2. Functionally, catalyzes a mechanistically unusual reaction, the ATP-dependent insertion of CO2 between the N7 and N8 nitrogen atoms of 7,8-diaminopelargonic acid (DAPA, also called 7,8-diammoniononanoate) to form a ureido ring. This chain is ATP-dependent dethiobiotin synthetase BioD, found in Serratia marcescens.